The primary structure comprises 107 residues: U1-lycotoxin-Ls1b (107 aa).

An N-terminal signal peptide occupies residues 1 to 20; that stretch reads MMKVLVVVALLVTLISYSSG. Positions 21–41 are excised as a propeptide; the sequence is EGIDDLEADELLSLMANEQTR. Intrachain disulfides connect cysteine 44/cysteine 59, cysteine 51/cysteine 68, cysteine 58/cysteine 86, and cysteine 70/cysteine 84.

It belongs to the neurotoxin 19 (CSTX) family. 04 (U1-Lctx) subfamily. In terms of tissue distribution, expressed by the venom gland.

Its subcellular location is the secreted. In Lycosa singoriensis (Wolf spider), this protein is U1-lycotoxin-Ls1b.